Reading from the N-terminus, the 350-residue chain is (S)-tetrahydroprotoberberine N-methyltransferase (350 aa).

Positions 91, 129, 153, 157, 179, 180, and 195 each coordinate S-adenosyl-L-methionine. Cysteine 325 is a catalytic residue.

The protein belongs to the CFA/CMAS family. As to quaternary structure, homodimer.

Its subcellular location is the cytoplasm. It catalyses the reaction (S)-stylopine + S-adenosyl-L-methionine = (S)-cis-N-methylstylopine + S-adenosyl-L-homocysteine. The catalysed reaction is (S)-tetrahydropalmatine + S-adenosyl-L-methionine = (S)-cis-N-methyltetrahydropalmatine + S-adenosyl-L-homocysteine. It carries out the reaction (S)-canadine + S-adenosyl-L-methionine = (S)-cis-N-methylcanadine + S-adenosyl-L-homocysteine. The enzyme catalyses (S)-scoulerine + S-adenosyl-L-methionine = (S)-cis-N-methylscoulerine + S-adenosyl-L-homocysteine. It participates in alkaloid biosynthesis. Its function is as follows. N-methyltransferase with a broad substrate range, accepting protoberberine alkaloids (R,S)-stylopine, (R,S)-nandinine and (R,S)-tetrahydropalmatine, and to a lesser extent (R,S)-canadine, (R,S)-tetrahydrogroenlandicine (cheilanthifoline) and (S)-scoulerine. In Eschscholzia californica (California poppy), this protein is (S)-tetrahydroprotoberberine N-methyltransferase.